The primary structure comprises 196 residues: Pyridoxal 5'-phosphate synthase subunit PdxT (196 aa).

46–48 (GES) serves as a coordination point for L-glutamine. The active-site Nucleophile is the Cys-78. L-glutamine contacts are provided by residues Arg-105 and 134–135 (IR). Active-site charge relay system residues include His-170 and Glu-172.

Belongs to the glutaminase PdxT/SNO family. In the presence of PdxS, forms a dodecamer of heterodimers. Only shows activity in the heterodimer.

It catalyses the reaction aldehydo-D-ribose 5-phosphate + D-glyceraldehyde 3-phosphate + L-glutamine = pyridoxal 5'-phosphate + L-glutamate + phosphate + 3 H2O + H(+). The catalysed reaction is L-glutamine + H2O = L-glutamate + NH4(+). It participates in cofactor biosynthesis; pyridoxal 5'-phosphate biosynthesis. Functionally, catalyzes the hydrolysis of glutamine to glutamate and ammonia as part of the biosynthesis of pyridoxal 5'-phosphate. The resulting ammonia molecule is channeled to the active site of PdxS. The sequence is that of Pyridoxal 5'-phosphate synthase subunit PdxT from Pelotomaculum thermopropionicum (strain DSM 13744 / JCM 10971 / SI).